A 45-amino-acid polypeptide reads, in one-letter code: Temporin-SHf (45 aa).

Residues 1–10 (FLGTINLSLC) form the signal peptide. A propeptide spanning residues 11–35 (EEERDADEEERRDEPDESNVEVKKR) is cleaved from the precursor. Phe43 is modified (phenylalanine amide).

The protein belongs to the frog skin active peptide (FSAP) family. Temporin subfamily.

The protein resides in the secreted. Its subcellular location is the target cell membrane. Non-amphipathic alpha-helical antimicrobial peptide with potent activity against some Gram-positive bacteria (including methicillin-resistant Staphylococcus aureus (MRSA)), weak activity against Gram-negative bacteria and no activity against fungi. Permeabilizates membranes through a detergent-like effect probably via the carpet mechanism. More precisely, it strongly and selectively perturbs anionic bilayers membranes by interacting with the polar headgroups and the glycerol backbone region of the phospholipids, hence disrupting the acyl chain packing of the bilayer. Is not active against Leishmania (promastigote and axenic amastigote forms). Does not show hemolytic activity. Does not show toxicity for human THP-1-derived macrophages. This is Temporin-SHf from Pelophylax saharicus (Sahara frog).